We begin with the raw amino-acid sequence, 45 residues long: Photosystem II reaction center protein K (45 aa).

Residues Met1–Ala8 constitute a propeptide that is removed on maturation. Residues Leu24 to Phe44 traverse the membrane as a helical segment.

Belongs to the PsbK family. PSII is composed of 1 copy each of membrane proteins PsbA, PsbB, PsbC, PsbD, PsbE, PsbF, PsbH, PsbI, PsbJ, PsbK, PsbL, PsbM, PsbT, PsbX, PsbY, PsbZ, Psb30/Ycf12, peripheral proteins PsbO, CyanoQ (PsbQ), PsbU, PsbV and a large number of cofactors. It forms dimeric complexes.

It is found in the cellular thylakoid membrane. In terms of biological role, one of the components of the core complex of photosystem II (PSII). PSII is a light-driven water:plastoquinone oxidoreductase that uses light energy to abstract electrons from H(2)O, generating O(2) and a proton gradient subsequently used for ATP formation. It consists of a core antenna complex that captures photons, and an electron transfer chain that converts photonic excitation into a charge separation. In Cyanothece sp. (strain PCC 7425 / ATCC 29141), this protein is Photosystem II reaction center protein K.